A 483-amino-acid polypeptide reads, in one-letter code: Aspartyl/glutamyl-tRNA(Asn/Gln) amidotransferase subunit B (483 aa).

It belongs to the GatB/GatE family. GatB subfamily. As to quaternary structure, heterotrimer of A, B and C subunits.

It catalyses the reaction L-glutamyl-tRNA(Gln) + L-glutamine + ATP + H2O = L-glutaminyl-tRNA(Gln) + L-glutamate + ADP + phosphate + H(+). It carries out the reaction L-aspartyl-tRNA(Asn) + L-glutamine + ATP + H2O = L-asparaginyl-tRNA(Asn) + L-glutamate + ADP + phosphate + 2 H(+). Functionally, allows the formation of correctly charged Asn-tRNA(Asn) or Gln-tRNA(Gln) through the transamidation of misacylated Asp-tRNA(Asn) or Glu-tRNA(Gln) in organisms which lack either or both of asparaginyl-tRNA or glutaminyl-tRNA synthetases. The reaction takes place in the presence of glutamine and ATP through an activated phospho-Asp-tRNA(Asn) or phospho-Glu-tRNA(Gln). This is Aspartyl/glutamyl-tRNA(Asn/Gln) amidotransferase subunit B from Granulibacter bethesdensis (strain ATCC BAA-1260 / CGDNIH1).